Here is a 1273-residue protein sequence, read N- to C-terminus: Cullin-associated NEDD8-dissociated protein 2 (1273 aa).

At serine 2 the chain carries N-acetylserine. HEAT repeat units follow at residues 2–36 (STGAFYISSLLEKMTSSDKDFSPKSLGGSRVLDPL), 37–74 (PWLQILAAITDWISGDRTQDLALPRFMATSDLMSELQK), 82–119 (DSERKVVRTLLRLLEDRSGEVQNLAVKCLGPLVGKVKE), 121–157 (QVENIVDTLCANMRSDKEQLRDIAGIGLKTVLSELPP), 167–205 (SVCRKITGQLTSAIAQQEDVAVQLEALDILSDMLSRLGA), 209–246 (TFHASLLHCLLPQLSSPRLAVRKRTVVALGHLAAACST), 248–284 (LFVELADHLVDRLPGPRAPASPAAIRTLIQCLGSVGR), 292–329 (AHLDRLMPLVEEFCNLDDDELRESCLQAFEAFLRKCPK), 364–405 (TEDS…SRPD), 409–446 (DFHCTLAPALIRCFKEREENVKADIFGAYIMLLRHTRP), 469–506 (AQVPLVMKALQRQLKDRNVRTRQGCFNLFTELAGVLPG), 554–591 (PHLPTLLPPVMACVADPFYKVAAEALLVLQELVRTLWP), 602–641 (PYVGEMSTATLARLRATDLDQEVKERAISCVGHLVGHLGD), 685–722 (PILAEALPILASFLRKNQRALRLATLAALDALAQSQGL), 727–764 (PAVRSVLAELPALVSENDMHVAQLAVDFLTTVTQTQPA), 768–807 (EVSGPVLEELLQLLHSPLLPAGVLAATEGFLQALVGTRPP), 809–850 (VEYS…ALSA), 894–931 (GPQRELKTVLLEALGSPSEDVRAAAAYALGRVGAGNLP), 933–968 (FLPFLLAQIEAQPRRQYLLLHALREALGAAQPDNLK), 970–1003 (YVEDVWALLFQRCESPEEGTRCVVAECIGKLVFV), 1004–1040 (NPPFLLPRFRKQLAAGQPYTRSTVITAVKFLISDQPH), 1044–1081 (PLLKSFIAEFMESLQDPDLNVRRATLTFFNSAVHNKPS), 1085–1121 (DLLDDILPLLYQETKIRRDLIREVEMGPFKHTVDDGL), 1142–1178 (LDICEFLNHVEDGLKDHYDIRMLTFIMLARLAALCPA), 1194–1231 (TCTAKVKAGSVKQELEKQDELKRSAMRAVAALMTNPEV), and 1241–1273 (STQIRSNPELATLFESIQKDTASGPSMDSMELS). Residues 352–383 (YNHDSDEEEQMETEDSEFSEQESEDEYSDDDD) are disordered. The segment covering 356 to 383 (SDEEEQMETEDSEFSEQESEDEYSDDDD) has biased composition (acidic residues).

Belongs to the CAND family. Binds TBP, CNOT3 and UBE3C. Post-translationally, ubiquitinated and targeted for proteasomal degradation. In terms of tissue distribution, detected in heart and skeletal muscle.

It localises to the nucleus. Probable assembly factor of SCF (SKP1-CUL1-F-box protein) E3 ubiquitin ligase complexes that promotes the exchange of the substrate-recognition F-box subunit in SCF complexes, thereby playing a key role in the cellular repertoire of SCF complexes. The sequence is that of Cullin-associated NEDD8-dissociated protein 2 (Cand2) from Rattus norvegicus (Rat).